We begin with the raw amino-acid sequence, 485 residues long: NADH-quinone oxidoreductase subunit N (485 aa).

The next 14 helical transmembrane spans lie at 8-28 (LIAL…MLSI), 35-55 (FLNA…LWFV), 71-91 (GFAM…CTFA), 105-125 (FYLL…ANHL), 127-147 (SLFL…GYAF), 159-179 (YTIL…LVYA), 203-223 (LLAG…LVPF), 235-255 (PAPV…GVVM), 271-291 (VVLA…ALSQ), 297-317 (LLGY…IALQ), 326-346 (VGVY…VVSL), 373-393 (AAVM…LGFI), 408-430 (WWLV…RVAV), and 455-475 (IVVL…QPLI).

It belongs to the complex I subunit 2 family. As to quaternary structure, NDH-1 is composed of 13 different subunits. Subunits NuoA, H, J, K, L, M, N constitute the membrane sector of the complex.

It is found in the cell inner membrane. It carries out the reaction a quinone + NADH + 5 H(+)(in) = a quinol + NAD(+) + 4 H(+)(out). Its function is as follows. NDH-1 shuttles electrons from NADH, via FMN and iron-sulfur (Fe-S) centers, to quinones in the respiratory chain. The immediate electron acceptor for the enzyme in this species is believed to be ubiquinone. Couples the redox reaction to proton translocation (for every two electrons transferred, four hydrogen ions are translocated across the cytoplasmic membrane), and thus conserves the redox energy in a proton gradient. The chain is NADH-quinone oxidoreductase subunit N from Escherichia coli O1:K1 / APEC.